A 525-amino-acid chain; its full sequence is Cytochrome P450 4V2 (525 aa).

The chain crosses the membrane as a helical span at residues 13 to 33 (LLLWGAASAVSLAGASLVLSL). Heme contacts are provided by glutamate 329 and cysteine 467.

This sequence belongs to the cytochrome P450 family. Heme serves as cofactor.

Its subcellular location is the endoplasmic reticulum membrane. It catalyses the reaction dodecanoate + reduced [NADPH--hemoprotein reductase] + O2 = 12-hydroxydodecanoate + oxidized [NADPH--hemoprotein reductase] + H2O + H(+). The enzyme catalyses tetradecanoate + reduced [NADPH--hemoprotein reductase] + O2 = 14-hydroxytetradecanoate + oxidized [NADPH--hemoprotein reductase] + H2O + H(+). It carries out the reaction hexadecanoate + reduced [NADPH--hemoprotein reductase] + O2 = 16-hydroxyhexadecanoate + oxidized [NADPH--hemoprotein reductase] + H2O + H(+). The catalysed reaction is (5Z,8Z,11Z,14Z,17Z)-eicosapentaenoate + reduced [NADPH--hemoprotein reductase] + O2 = 20-hydroxy-(5Z,8Z,11Z,14Z,17Z)-eicosapentaenoate + oxidized [NADPH--hemoprotein reductase] + H2O + H(+). It catalyses the reaction (4Z,7Z,10Z,13Z,16Z,19Z)-docosahexaenoate + reduced [NADPH--hemoprotein reductase] + O2 = 22-hydroxy-(4Z,7Z,10Z,13Z,16Z,19Z)-docosahexaenoate + oxidized [NADPH--hemoprotein reductase] + H2O + H(+). It participates in lipid metabolism; fatty acid metabolism. Its activity is regulated as follows. Inhibited by N-hydroxy-N'-(4-n-butyl-2-methylphenyl formamidine)(HET0016) with an IC(50) of 38 nM. Its function is as follows. A cytochrome P450 monooxygenase involved in fatty acid metabolism in the eye. Catalyzes the omega-hydroxylation of polyunsaturated fatty acids (PUFAs) docosahexaenoate (DHA) and its precursor eicosapentaenoate (EPA), and may contribute to the homeostasis of these retinal PUFAs. Omega hydroxylates saturated fatty acids such as laurate, myristate and palmitate, the catalytic efficiency decreasing in the following order: myristate &gt; laurate &gt; palmitate (C14&gt;C12&gt;C16). Mechanistically, uses molecular oxygen inserting one oxygen atom into a substrate, and reducing the second into a water molecule, with two electrons provided by NADPH via cytochrome P450 reductase (CPR; NADPH-ferrihemoprotein reductase). This chain is Cytochrome P450 4V2 (CYP4V2), found in Pongo abelii (Sumatran orangutan).